A 213-amino-acid chain; its full sequence is Cytochrome b6 (213 aa).

A helical transmembrane segment spans residues 30–50 (IFYCLGGLTLLAFLVQCVTGL). Heme c is bound at residue Cys-33. 2 residues coordinate heme b: His-84 and His-98. 3 helical membrane-spanning segments follow: residues 88–108 (ANLM…TGSF), 114–134 (LNWL…FTGY), and 184–204 (LHVM…FIMI). His-185 and His-200 together coordinate heme b.

It belongs to the cytochrome b family. PetB subfamily. The subunits of the cytochrome bc complex are a Rieske Fe-S protein (PetC), cytochrome b6 (PetB), subunit IV (PetD), and a diheme cytochrome c (PetX). Heme b is required as a cofactor. Heme c serves as cofactor.

The protein localises to the cell membrane. Component of the cytochrome bc complex which donates electrons to the photosynthetic reaction center. This chain is Cytochrome b6, found in Heliobacterium mobile (Heliobacillus mobilis).